The sequence spans 264 residues: Thymidylate synthase (264 aa).

R21 contacts dUMP. H51 serves as a coordination point for (6R)-5,10-methylene-5,6,7,8-tetrahydrofolate. A dUMP-binding site is contributed by 126 to 127 (RR). The active-site Nucleophile is C146. Residues 166-169 (RSCD), N177, and 207-209 (HLY) each bind dUMP. Position 169 (D169) interacts with (6R)-5,10-methylene-5,6,7,8-tetrahydrofolate. A263 contacts (6R)-5,10-methylene-5,6,7,8-tetrahydrofolate.

This sequence belongs to the thymidylate synthase family. Bacterial-type ThyA subfamily. As to quaternary structure, homodimer.

It localises to the cytoplasm. The enzyme catalyses dUMP + (6R)-5,10-methylene-5,6,7,8-tetrahydrofolate = 7,8-dihydrofolate + dTMP. The protein operates within pyrimidine metabolism; dTTP biosynthesis. In terms of biological role, catalyzes the reductive methylation of 2'-deoxyuridine-5'-monophosphate (dUMP) to 2'-deoxythymidine-5'-monophosphate (dTMP) while utilizing 5,10-methylenetetrahydrofolate (mTHF) as the methyl donor and reductant in the reaction, yielding dihydrofolate (DHF) as a by-product. This enzymatic reaction provides an intracellular de novo source of dTMP, an essential precursor for DNA biosynthesis. The sequence is that of Thymidylate synthase from Pectobacterium atrosepticum (strain SCRI 1043 / ATCC BAA-672) (Erwinia carotovora subsp. atroseptica).